The sequence spans 98 residues: MKAVGAWLLCLLLLGLALQGAASRAHQHSMEIRTPDINPAWYAGRGIRPVGRFGRRRAAPGDGPRPGPRRELACIPLEGGAEPSRALLGRLTAQLVQE.

Residues M1–A22 form the signal peptide. F53 carries the phenylalanine amide modification. A propeptide spanning residues A58–E98 is cleaved from the precursor.

More abundantly expressed in the brainstem than the hypothalamus.

Its subcellular location is the secreted. In terms of biological role, stimulates prolactin (PRL) release and regulates the expression of prolactin through its receptor GPR10. May stimulate lactotrophs directly to secrete PRL. This Ovis aries (Sheep) protein is Prolactin-releasing peptide (PRLH).